Consider the following 326-residue polypeptide: Ficolin-1 (326 aa).

Positions M1–A29 are cleaved as a signal peptide. Residues G55–R93 enclose the Collagen-like domain. 2 stretches are compositionally biased toward low complexity: residues G61–P71 and P78–P89. The segment at G61–S110 is disordered. The span at K90–E104 shows a compositional bias: basic and acidic residues. The region spanning Q109–T326 is the Fibrinogen C-terminal domain. Disulfide bonds link C111/C139 and C118/C146. Residues P115–G154 are a domain; contributes to trimerization. Positions W155 to N243 are b domain; contributes to trimerization. Ca(2+) is bound by residues D262 and D264. The N-linked (GlcNAc...) asparagine glycan is linked to N265. The cysteines at positions 270 and 283 are disulfide-linked. Position 282–284 (A282–H284) interacts with a carbohydrate. The N-linked (GlcNAc...) asparagine glycan is linked to N313. Positions Q317–T326 are p domain.

Belongs to the ficolin lectin family. Homotrimer. Interacts with elastin/ELN. Interacts (via Fibrinogen C-terminal domain) with FFAR2. Interacts with CRP; may regulate monocyte activation by FCN1. In terms of tissue distribution, most abundantly expressed in placenta and lung.

It is found in the secreted. It localises to the cell membrane. Its function is as follows. Extracellular lectin functioning as a pattern-recognition receptor in innate immunity. Binds the sugar moieties of pathogen-associated molecular patterns (PAMPs) displayed on microbes and activates the lectin pathway of the complement system. May also activate monocytes through a G protein-coupled receptor, FFAR2, inducing the secretion of interleukin-8/IL-8. Binds preferentially to 9-O-acetylated 2-6-linked sialic acid derivatives and to various glycans containing sialic acid engaged in a 2-3 linkage. This Sus scrofa (Pig) protein is Ficolin-1 (FCN1).